The sequence spans 386 residues: UDP-N-acetylbacillosamine transaminase (386 aa).

Substrate is bound by residues 25 to 28 (NYIA), Ala56, and Ser179. Residue Lys184 is modified to N6-(pyridoxal phosphate)lysine. Residues Asn227 and 325–328 (QIET) contribute to the substrate site.

This sequence belongs to the DegT/DnrJ/EryC1 family. Pyridoxal 5'-phosphate is required as a cofactor.

It catalyses the reaction UDP-N-acetylbacillosamine + 2-oxoglutarate = UDP-2-acetamido-2,6-dideoxy-alpha-D-xylo-hex-4-ulose + L-glutamate. The protein operates within protein modification; protein glycosylation. In terms of biological role, aminotransferase involved in the bacillosamine biosynthesis pathway by producing UDP-4-amino-4,6-dideoxy-alpha-D-GlcNAc (UDP-2-acetamido-4-amino-2,4,6-trideoxy-alpha-D-glucopyranose), a precursor used in the production of the glycan component 2,4-diacetamido-2,4,6-trideoxy-alpha-D-glucopyranose. Required for host colonization and virulence. Involved in the N-linked protein glycosylation pathway. This is UDP-N-acetylbacillosamine transaminase (pglE) from Campylobacter jejuni subsp. jejuni serotype O:2 (strain ATCC 700819 / NCTC 11168).